The primary structure comprises 923 residues: Probable ribosylation factor GTPase-activating protein cnt6 (923 aa).

Ser207 bears the Phosphoserine mark. The segment covering 444 to 455 (TTRRDKGREMHR) has biased composition (basic and acidic residues). The disordered stretch occupies residues 444–476 (TTRRDKGREMHRSQVIQTSGRPKSMAPPSPSPI). The PH domain maps to 526 to 632 (KIFKEGLLLV…WIEAICEAAK (107 aa)). An Arf-GAP domain is found at 714–837 (NIFIQMLRKT…AFIDFAGVDA (124 aa)). A C4-type zinc finger spans residues 730 to 754 (CADCGSVKDVTWCSINIPVVLCIEC).

It localises to the cytoplasm. The protein resides in the cell tip. Functionally, GTPase-activating protein for the ADP ribosylation factor family. This chain is Probable ribosylation factor GTPase-activating protein cnt6 (cnt6), found in Schizosaccharomyces pombe (strain 972 / ATCC 24843) (Fission yeast).